Reading from the N-terminus, the 181-residue chain is Ribosome maturation factor RimM (181 aa).

The region spanning 98–177 (EGEFFYCDLV…KITTHNAKTL (80 aa)) is the PRC barrel domain.

The protein belongs to the RimM family. Binds ribosomal protein uS19.

Its subcellular location is the cytoplasm. Functionally, an accessory protein needed during the final step in the assembly of 30S ribosomal subunit, possibly for assembly of the head region. Essential for efficient processing of 16S rRNA. May be needed both before and after RbfA during the maturation of 16S rRNA. It has affinity for free ribosomal 30S subunits but not for 70S ribosomes. The sequence is that of Ribosome maturation factor RimM from Helicobacter pylori (strain HPAG1).